A 344-amino-acid polypeptide reads, in one-letter code: L-rhamnose-proton symporter (344 aa).

Transmembrane regions (helical) follow at residues 4 to 24, 38 to 58, 68 to 88, 101 to 121, 137 to 157, 175 to 195, 214 to 234, 259 to 279, 290 to 310, and 323 to 343; these read AITM…CFYA, WSVG…ALLL, FSLS…IGNI, MGIG…TPII, TLLG…AGQL, LVLA…MNAA, LPSY…FCFI, VLLS…YAWG, ISWM…GLVL, and VLSL…MGMA.

The protein belongs to the L-rhamnose transporter (TC 2.A.7.6) family.

Its subcellular location is the cell inner membrane. The enzyme catalyses L-rhamnopyranose(in) + H(+)(in) = L-rhamnopyranose(out) + H(+)(out). Functionally, uptake of L-rhamnose across the cytoplasmic membrane with the concomitant transport of protons into the cell (symport system). The chain is L-rhamnose-proton symporter from Escherichia coli O17:K52:H18 (strain UMN026 / ExPEC).